Consider the following 338-residue polypeptide: tRNA-specific 2-thiouridylase MnmA (338 aa).

ATP contacts are provided by residues 6–13 (LMSGGIDS) and Met-32. The active-site Nucleophile is Cys-87. Cys-87 and Cys-185 are disulfide-bonded. Residue Gly-111 coordinates ATP. The interval 135 to 137 (KDQ) is interaction with tRNA. Residue Cys-185 is the Cysteine persulfide intermediate of the active site. The tract at residues 288–289 (RY) is interaction with tRNA.

It belongs to the MnmA/TRMU family.

The protein resides in the cytoplasm. The catalysed reaction is S-sulfanyl-L-cysteinyl-[protein] + uridine(34) in tRNA + AH2 + ATP = 2-thiouridine(34) in tRNA + L-cysteinyl-[protein] + A + AMP + diphosphate + H(+). Functionally, catalyzes the 2-thiolation of uridine at the wobble position (U34) of tRNA, leading to the formation of s(2)U34. The protein is tRNA-specific 2-thiouridylase MnmA of Syntrophomonas wolfei subsp. wolfei (strain DSM 2245B / Goettingen).